Here is a 193-residue protein sequence, read N- to C-terminus: HMG-Y-related protein A (193 aa).

An H15 domain is found at 11–81 (PIPPYPEMIL…LKNNYFRAGA (71 aa)). The tract at residues 75–193 (NYFRAGAPDA…PAVPSETAAA (119 aa)) is disordered. A Nuclear localization signal 1 (NLS) motif is present at residues 86–92 (PKRGRGR). DNA-binding regions (a.T hook) lie at residues 87–98 (KRGRGRPPKARD), 113–124 (GRGRGRPPKAKS), 138–149 (PKPRGRPPKKAK), and 173–184 (KRGRGRPPKVRP). A Nuclear localization signal 2 (NLS) motif is present at residues 145-149 (PKKAK).

Belongs to the histone H1/H5 family. Post-translationally, phosphorylated by CDK, this phosphorylation prevents DNA-binding. Motility is increased when hypophosphorylated. In terms of processing, acetylated.

It is found in the nucleus. The protein resides in the nucleolus. Functionally, binds A/T-rich DNA (e.g. present in the storage gamma-zein gene promoter) with a highly dynamic distribution into the nucleus. Probably involved in endosperm development, during cells shift from a mitotic cycle to endoreduplication leading to massive synthesis of storage proteins (zeins) and starch. This is HMG-Y-related protein A from Zea mays (Maize).